The primary structure comprises 570 residues: Proline--tRNA ligase (570 aa).

The protein belongs to the class-II aminoacyl-tRNA synthetase family. ProS type 1 subfamily. As to quaternary structure, homodimer.

Its subcellular location is the cytoplasm. It catalyses the reaction tRNA(Pro) + L-proline + ATP = L-prolyl-tRNA(Pro) + AMP + diphosphate. Catalyzes the attachment of proline to tRNA(Pro) in a two-step reaction: proline is first activated by ATP to form Pro-AMP and then transferred to the acceptor end of tRNA(Pro). As ProRS can inadvertently accommodate and process non-cognate amino acids such as alanine and cysteine, to avoid such errors it has two additional distinct editing activities against alanine. One activity is designated as 'pretransfer' editing and involves the tRNA(Pro)-independent hydrolysis of activated Ala-AMP. The other activity is designated 'posttransfer' editing and involves deacylation of mischarged Ala-tRNA(Pro). The misacylated Cys-tRNA(Pro) is not edited by ProRS. The protein is Proline--tRNA ligase of Shewanella oneidensis (strain ATCC 700550 / JCM 31522 / CIP 106686 / LMG 19005 / NCIMB 14063 / MR-1).